A 287-amino-acid polypeptide reads, in one-letter code: 4-diphosphocytidyl-2-C-methyl-D-erythritol kinase (287 aa).

Residue K12 is part of the active site. 94 to 104 is a binding site for ATP; that stretch reads PAQAGMGGGSS. D136 is an active-site residue.

This sequence belongs to the GHMP kinase family. IspE subfamily.

It carries out the reaction 4-CDP-2-C-methyl-D-erythritol + ATP = 4-CDP-2-C-methyl-D-erythritol 2-phosphate + ADP + H(+). It participates in isoprenoid biosynthesis; isopentenyl diphosphate biosynthesis via DXP pathway; isopentenyl diphosphate from 1-deoxy-D-xylulose 5-phosphate: step 3/6. Catalyzes the phosphorylation of the position 2 hydroxy group of 4-diphosphocytidyl-2C-methyl-D-erythritol. The polypeptide is 4-diphosphocytidyl-2-C-methyl-D-erythritol kinase (Albidiferax ferrireducens (strain ATCC BAA-621 / DSM 15236 / T118) (Rhodoferax ferrireducens)).